Here is a 201-residue protein sequence, read N- to C-terminus: Peptide deformylase (201 aa).

Residues 1–24 are disordered; that stretch reads MANHFSQLAKKSKTNGNSEKIAKE. Fe cation-binding residues include C121 and H163. E164 is an active-site residue. H167 contacts Fe cation.

The protein belongs to the polypeptide deformylase family. It depends on Fe(2+) as a cofactor.

It carries out the reaction N-terminal N-formyl-L-methionyl-[peptide] + H2O = N-terminal L-methionyl-[peptide] + formate. Functionally, removes the formyl group from the N-terminal Met of newly synthesized proteins. Requires at least a dipeptide for an efficient rate of reaction. N-terminal L-methionine is a prerequisite for activity but the enzyme has broad specificity at other positions. In Prochlorococcus marinus (strain MIT 9312), this protein is Peptide deformylase.